A 174-amino-acid chain; its full sequence is Myosin regulatory light chain sqh (174 aa).

Thr21 carries the phosphothreonine modification. Phosphoserine is present on Ser22. EF-hand domains are found at residues 31 to 66 (AQIA…LGKN) and 100 to 135 (DPED…MGDR). Ca(2+) contacts are provided by Asp44, Asn46, Asp48, and Asp55.

In terms of assembly, myosin is a hexamer of 2 heavy chains and 4 light chains. Post-translationally, phosphorylation plays a central role in myosin regulation.

Required for cytokinesis, could regulate contractile ring function. The polypeptide is Myosin regulatory light chain sqh (sqh) (Drosophila melanogaster (Fruit fly)).